We begin with the raw amino-acid sequence, 430 residues long: Enolase (430 aa).

Gln-163 serves as a coordination point for (2R)-2-phosphoglycerate. The active-site Proton donor is the Glu-205. Positions 242, 287, and 314 each coordinate Mg(2+). Residues Lys-339, Arg-368, Ser-369, and Lys-390 each coordinate (2R)-2-phosphoglycerate. The active-site Proton acceptor is Lys-339.

Belongs to the enolase family. It depends on Mg(2+) as a cofactor.

It is found in the cytoplasm. Its subcellular location is the secreted. The protein resides in the cell surface. It carries out the reaction (2R)-2-phosphoglycerate = phosphoenolpyruvate + H2O. The protein operates within carbohydrate degradation; glycolysis; pyruvate from D-glyceraldehyde 3-phosphate: step 4/5. Catalyzes the reversible conversion of 2-phosphoglycerate (2-PG) into phosphoenolpyruvate (PEP). It is essential for the degradation of carbohydrates via glycolysis. The sequence is that of Enolase from Bacillus licheniformis (strain ATCC 14580 / DSM 13 / JCM 2505 / CCUG 7422 / NBRC 12200 / NCIMB 9375 / NCTC 10341 / NRRL NRS-1264 / Gibson 46).